We begin with the raw amino-acid sequence, 344 residues long: Dihydroorotase (344 aa).

2 residues coordinate Zn(2+): histidine 13 and histidine 15. Substrate contacts are provided by residues 15 to 17 and asparagine 41; that span reads HLR. Lysine 99, histidine 136, and histidine 174 together coordinate Zn(2+). Residue lysine 99 is modified to N6-carboxylysine. Histidine 136 contributes to the substrate binding site. A substrate-binding site is contributed by leucine 219. Aspartate 247 is a Zn(2+) binding site. Aspartate 247 is an active-site residue. Positions 251 and 263 each coordinate substrate.

This sequence belongs to the metallo-dependent hydrolases superfamily. DHOase family. Class II DHOase subfamily. As to quaternary structure, homodimer. It depends on Zn(2+) as a cofactor.

It carries out the reaction (S)-dihydroorotate + H2O = N-carbamoyl-L-aspartate + H(+). It functions in the pathway pyrimidine metabolism; UMP biosynthesis via de novo pathway; (S)-dihydroorotate from bicarbonate: step 3/3. Functionally, catalyzes the reversible cyclization of carbamoyl aspartate to dihydroorotate. The protein is Dihydroorotase of Shewanella denitrificans (strain OS217 / ATCC BAA-1090 / DSM 15013).